Here is a 235-residue protein sequence, read N- to C-terminus: MLDGRPDSPPITIALAKGALLPEAIQCLQQVGIDFSRFLDPGNRLLRIESPTRLNGQRYEALLVRTHDVPVYVEYGQAQLGIVGYDVLRERYAGTEARVAHLLDLQFGHCRMSVALPQDSPYHSAAQLPAHARVASKFVGCAREYFDRLDLPVELISLYGSVELAPLTGMADAIVDLVATGRTLRENGLIERDCLFESTARLIAHPISYRVNQQPIRELITQIRERWLGSLLVGG.

This sequence belongs to the ATP phosphoribosyltransferase family. Short subfamily. Heteromultimer composed of HisG and HisZ subunits.

It is found in the cytoplasm. It catalyses the reaction 1-(5-phospho-beta-D-ribosyl)-ATP + diphosphate = 5-phospho-alpha-D-ribose 1-diphosphate + ATP. Its pathway is amino-acid biosynthesis; L-histidine biosynthesis; L-histidine from 5-phospho-alpha-D-ribose 1-diphosphate: step 1/9. Catalyzes the condensation of ATP and 5-phosphoribose 1-diphosphate to form N'-(5'-phosphoribosyl)-ATP (PR-ATP). Has a crucial role in the pathway because the rate of histidine biosynthesis seems to be controlled primarily by regulation of HisG enzymatic activity. This Synechococcus sp. (strain JA-2-3B'a(2-13)) (Cyanobacteria bacterium Yellowstone B-Prime) protein is ATP phosphoribosyltransferase.